We begin with the raw amino-acid sequence, 291 residues long: Feruloyl esterase B (291 aa).

Positions 1–18 (MLVRSFLGFAVLAATCLA) are cleaved as a signal peptide. N117 carries an N-linked (GlcNAc...) asparagine glycan. S136 acts as the Charge relay system in catalysis. A glycan (N-linked (GlcNAc...) asparagine) is linked at N179.

The protein belongs to the carbohydrate esterase 1 (CE1) family. Feruloyl esterase type B subfamily.

The protein resides in the secreted. The catalysed reaction is feruloyl-polysaccharide + H2O = ferulate + polysaccharide.. Functionally, feruloyl esterase which acts in synergy with xylanases in degradation of plant cell walls. Hydrolyzes the ester linkage of hydroxycinnamic acids (ferulic acid (FA) and p-coumaric acid) and diferulates present in plant cell walls. Is active on substrates containing ferulic acid ester linked to the C-5 and C-2 linkages of arabinofuranose, while it was found capable of de-esterifying acetylated glucuronoxylans. Efficiently releases ferulic acid (FA) from destarched wheat bran when incubated with an M3 xylanase. This is Feruloyl esterase B (Fae1a) from Thermothelomyces thermophilus (strain ATCC 42464 / BCRC 31852 / DSM 1799) (Sporotrichum thermophile).